The chain runs to 585 residues: MNKSVKKKIKDEINVIVTNLALSNNIKLDNININIQKPPKSDLGDISILMFEIGKTLKLPIEIISEEIIKNLKTKYEIKAVGPYLNIKISRKEYINNTIQMVNTQKDTYGTSKYLDNKKIILEFSSPNTNKPLHVGHLRNDVIGESLSRILKAVGAKITKINLINDRGVHICKSMLAYKKFGNGITPEKAFKKGDHLIGDFYVKYNKYSQENENAEKEIQDLLLLWEQKDVSTIELWKKLNKWAIEGIKETYEITNTSFDKIYLESEIFKIGKNVVLEGLEKGFCYKREDGAICIDLPSDSDEKADTKVKQKVLIRSNGTSIYLTQDLGNIAVRTKEFNFEEMIYVVGSEQIQHFKSLFFVAEKLGLSKNKKLIHLSHGMVNLVDGKMKSREGNVIDADNLISNLIELIIPEMTQKIENKESAKKNALNIALGAIHYYLLKSAIHKDIVFNKKESLSFTGNSGPYIQYVGARINSILEKYKALSIPVMEKIDFELLKHEKEWEIIKIISELEENIINAAKDLNPSILTSYSYSLAKHFSTYYQEVKVIDTNNINLTAARIEFLKAILQTIKNCMYLLNIPYMLKM.

Residues 127–137 (PNTNKPLHVGH) carry the 'HIGH' region motif.

The protein belongs to the class-I aminoacyl-tRNA synthetase family. In terms of assembly, monomer.

Its subcellular location is the cytoplasm. The enzyme catalyses tRNA(Arg) + L-arginine + ATP = L-arginyl-tRNA(Arg) + AMP + diphosphate. This chain is Arginine--tRNA ligase (argS), found in Borreliella burgdorferi (strain ATCC 35210 / DSM 4680 / CIP 102532 / B31) (Borrelia burgdorferi).